The primary structure comprises 322 residues: AA9 family lytic polysaccharide monooxygenase B (322 aa).

The signal sequence occupies residues 1–17 (MFSKSIIAASLLTAVTA). Histidine 18 lines the Cu(2+) pocket. N-linked (GlcNAc...) asparagine glycosylation is found at asparagine 53 and asparagine 68. An intrachain disulfide couples cysteine 56 to cysteine 173. Residue histidine 87 coordinates Cu(2+). Asparagine 121 and asparagine 133 each carry an N-linked (GlcNAc...) asparagine glycan. The O2 site is built by histidine 159 and glutamine 168. A Cu(2+)-binding site is contributed by tyrosine 170. A glycan (N-linked (GlcNAc...) asparagine) is linked at asparagine 197.

It belongs to the polysaccharide monooxygenase AA9 family. Requires Cu(2+) as cofactor.

It is found in the secreted. The catalysed reaction is [(1-&gt;4)-beta-D-glucosyl]n+m + reduced acceptor + O2 = 4-dehydro-beta-D-glucosyl-[(1-&gt;4)-beta-D-glucosyl]n-1 + [(1-&gt;4)-beta-D-glucosyl]m + acceptor + H2O.. Lytic polysaccharide monooxygenase (LPMO) that depolymerizes crystalline and amorphous polysaccharides via the oxidation of scissile alpha- or beta-(1-4)-glycosidic bonds, yielding C1 and C4 oxidation products. Catalysis by LPMOs requires the reduction of the active-site copper from Cu(II) to Cu(I) by a reducing agent and H(2)O(2) or O(2) as a cosubstrate. The protein is AA9 family lytic polysaccharide monooxygenase B of Botryotinia fuckeliana (strain B05.10) (Noble rot fungus).